A 457-amino-acid polypeptide reads, in one-letter code: Gustatory and odorant receptor 24 (457 aa).

Topologically, residues 1–115 (MSLYFNADTM…GGTAFVLASP (115 aa)) are cytoplasmic. Residues 116-136 (SMTYCVLFFLLLTVYIAFILL) form a helical membrane-spanning segment. Over 137 to 152 (NRIEIVRTLEGRFEES) the chain is Extracellular. Residues 153–173 (VIAYLFIVNILPILIIPLMWY) traverse the membrane as a helical segment. Over 174–209 (ESRKVVSVVNGWVDFETVYRETTGRALELRLRTKAQ) the chain is Cytoplasmic. Residues 210–230 (VIAILLPILCSLSVAITHVTM) traverse the membrane as a helical segment. Over 231–237 (VDFKLLQ) the chain is Extracellular. A helical transmembrane segment spans residues 238–258 (VIPYCVLDTITYMMGGYWYMA). At 259 to 309 (CETLSITAKILAEDFQRALRHVGPAAKVSEYRSLWLRLSKLARDTGFSTCY) the chain is on the cytoplasmic side. The chain crosses the membrane as a helical span at residues 310-330 (TFTFICLYLFFIITLSIYGLM). Topologically, residues 331-341 (SQISDGFGVKD) are extracellular. Residues 342–362 (IGLAVTAFCSVGLLFYICDEA) form a helical membrane-spanning segment. The Cytoplasmic portion of the chain corresponds to 363–421 (HYASFNVRTNFQKKLLMVELSWMNTDAQTEINMFLRATEMNPSSINLGGFFDVNRTLFK). A helical transmembrane segment spans residues 422 to 442 (SLLATMVTYLVVLLQFQISIP). At 443–457 (DEPSAMLMHSNSSHS) the chain is on the extracellular side. Residue N453 is glycosylated (N-linked (GlcNAc...) asparagine).

Belongs to the insect chemoreceptor superfamily. Gustatory receptor (GR) family. Gr21a subfamily. Carbon dioxide-responsive neurons coexpress GPRgr22 and GPRgr24 in the maxillary palp, at both larval and adult life stages.

The protein localises to the cell membrane. Functionally, gustatory receptor which mediates acceptance or avoidance behavior, depending on its substrates. GPRgr22 and GPRgr24 together are sufficient for olfactory carbon dioxide-chemosensation. In Anopheles gambiae (African malaria mosquito), this protein is Gustatory and odorant receptor 24.